Consider the following 355-residue polypeptide: Arginine kinase (355 aa).

The 83-residue stretch at 8–90 (KLQAGFKKLE…FDPIIEDYHV (83 aa)) folds into the Phosphagen kinase N-terminal domain. 63–67 (GVGIY) contributes to the L-arginine binding site. One can recognise a Phosphagen kinase C-terminal domain in the interval 118-355 (YVISTRVRCG…LQLIKMEKEM (238 aa)). ATP contacts are provided by residues 121-125 (STRVR) and histidine 184. Residue glutamate 224 participates in L-arginine binding. Position 228 (arginine 228) interacts with ATP. Residue cysteine 270 participates in L-arginine binding. ATP is bound by residues 279 to 283 (RASVH) and 308 to 313 (RGTRGE). Glutamate 313 provides a ligand contact to L-arginine.

This sequence belongs to the ATP:guanido phosphotransferase family. As to quaternary structure, monomer.

The enzyme catalyses L-arginine + ATP = N(omega)-phospho-L-arginine + ADP + H(+). In Penaeus japonicus (Kuruma prawn), this protein is Arginine kinase.